A 943-amino-acid chain; its full sequence is MDTKEEKKEQKERKQSYFARLKKKKQAKQNAEIVSAASSKSRSGKDDANSDILEQDKFNVTAEGDHSTDDKKKRKSNQLKEIRRTELKRYYSVDDNQNKTHDKKEKKMMVQKPQGTMEYTAGSQDTLNSVALKFNVTPNKLVELNKLFTHTIVPGQVLFVPDANISSSTIQLSSSTPGATVSPSSSDAEYDKLPDADLARKALKPIERVLSSTSEEDEPGVVKFLKMNCRYFTDGKGVVGGVMIVTPNNIMFDPHKSDPLVIENGCEEYGLICPMEEVVSIALYSDISHMKIKDALPSDLPRDLCPLYRPGEWEDLASEKDINPFSKFKSINKEKRQQNGERTLALDAKSVRSPEESTERTCTRIEPPDNSELWKLKNLQSSRGTTSESPSVTQLSMRAALEPTAKENCLLKGDEDFVDLEELSSQPESGINKGDATKECLSYDQKKDGPHTVMSAKKGHVQSAQEVMGPESDTELKGALDLETAEKQDEAPEVDKHSGSPENLGESTLNIHEDLDKIKLIEFYLNKNKEGSQLLENVQKSELSDRKSIEPGGIDITLSSSLPQAGDSPPEDNKEPGTLWVKGGETLPLKLDPSAEETVINNKEVLDSLGSSLDKMCHSAQMDNKSEIQLWLLKRIQVPIEDILPSKEEKSKTPPMFLCIKVGKPMRKSFASHTATMVQQYSKRRKQPEYWFAVPRERVDHLYTFFVQWSPDVYGKDAKEQGFVVVEKEELNMIDNFFSEPTTKSWEIITVEEAKRRKSTCSYYEEEEEEEEGLPILQPHSALLENMHIEQLARRLPARVQGYPWRLAYSTLEHGTSLKTLYRKSASLDSPVLLVIKDMDNQIFGAYATHPFKFSDHYYGTGETFLYTFSPNFKVFKWSGENSYFINGDISSLELGGGGGRFGLWLDADLYHGRSNSCSTFNNDILSKKEDFIVQDLEVWTFE.

The residue at position 1 (M1) is an N-acetylmethionine. A compositionally biased stretch (basic and acidic residues) spans 1–15; it reads MDTKEEKKEQKERKQ. Positions 1–32 form a coiled coil; it reads MDTKEEKKEQKERKQSYFARLKKKKQAKQNAE. The disordered stretch occupies residues 1-83; sequence MDTKEEKKEQ…RKSNQLKEIR (83 aa). S92 is modified (phosphoserine). The LysM domain occupies 117 to 160; the sequence is MEYTAGSQDTLNSVALKFNVTPNKLVELNKLFTHTIVPGQVLFV. T137 is subject to Phosphothreonine. The disordered stretch occupies residues 169–189; the sequence is TIQLSSSTPGATVSPSSSDAE. A compositionally biased stretch (polar residues) spans 177 to 187; it reads PGATVSPSSSD. 5 positions are modified to phosphoserine: S182, S186, S211, S212, and S214. Residues 334 to 369 form a disordered region; that stretch reads EKRQQNGERTLALDAKSVRSPEESTERTCTRIEPPD. Basic and acidic residues predominate over residues 349-369; the sequence is KSVRSPEESTERTCTRIEPPD. Phosphoserine is present on residues S442, S498, and S500. Over residues 486-499 the composition is skewed to basic and acidic residues; it reads EKQDEAPEVDKHSG. Disordered regions lie at residues 486 to 507 and 543 to 576; these read EKQDEAPEVDKHSGSPENLGES and LSDRKSIEPGGIDITLSSSLPQAGDSPPEDNKEP. In terms of domain architecture, TLDc spans 782–943; it reads ALLENMHIEQ…VQDLEVWTFE (162 aa).

The protein belongs to the OXR1 family. Interacts with ESR1, ESR2A, ESR2B, THRB, PPARG and RARA in a ligand-inducible manner. Interacts with the heterodimer AHR-ARNT. As to expression, highly expressed in brain and kidney. Weakly expressed in mammary gland, lung and testis. In brain, expression is found in neurons of cerebral cortex, thalamus, hypothalamus, hippocampus, cerebellum, striatum and choroid plexus.

It localises to the nucleus. Enhances the transcriptional activities of several nuclear receptors. Involved in the coactivation of different nuclear receptors, such as ESR1, THRB, PPARG and RARA. This Mus musculus (Mouse) protein is Nuclear receptor coactivator 7 (Ncoa7).